The following is a 563-amino-acid chain: DNA repair protein rhp7 (563 aa).

Residues 1–101 (MSSGSRVRGP…TDEEAEDNED (101 aa)) form a disordered region. The segment covering 39–59 (ESAGQSTGTESEVIQTPTSVE) has biased composition (polar residues). Residues 78–90 (VKRRNLRNQKKKK) show a composition bias toward basic residues.

It belongs to the RAD7 family.

The protein localises to the nucleus. Functionally, involved in global genome repair (GGR) via nucleotide excision repair (NER), in conjunction with rhp16, after UV irradiation. This chain is DNA repair protein rhp7 (rhp7), found in Schizosaccharomyces pombe (strain 972 / ATCC 24843) (Fission yeast).